The primary structure comprises 711 residues: Long-chain-fatty-acid--CoA ligase 4 (711 aa).

The chain crosses the membrane as a helical; Signal-anchor for type III membrane protein span at residues 8–28 (LTIILLPVHLLITIYSALIFI). The Cytoplasmic portion of the chain corresponds to 29–711 (PWYFLTNAKK…KDIERMYGGK (683 aa)). S447 carries the phosphoserine modification.

It belongs to the ATP-dependent AMP-binding enzyme family. It depends on Mg(2+) as a cofactor.

It is found in the mitochondrion outer membrane. The protein resides in the peroxisome membrane. It localises to the microsome membrane. The protein localises to the endoplasmic reticulum membrane. Its subcellular location is the cell membrane. The enzyme catalyses a long-chain fatty acid + ATP + CoA = a long-chain fatty acyl-CoA + AMP + diphosphate. The catalysed reaction is (5Z,8Z,11Z,14Z)-eicosatetraenoate + ATP + CoA = (5Z,8Z,11Z,14Z)-eicosatetraenoyl-CoA + AMP + diphosphate. It carries out the reaction hexadecanoate + ATP + CoA = hexadecanoyl-CoA + AMP + diphosphate. It catalyses the reaction (E)-hexadec-2-enoate + ATP + CoA = (2E)-hexadecenoyl-CoA + AMP + diphosphate. The enzyme catalyses 15-hydroxy-(5Z,8Z,11Z,13E)-eicosatetraenoate + ATP + CoA = 15-hydroxy-(5Z,8Z,11Z,13E)-eicosatetraenoyl-CoA + AMP + diphosphate. The catalysed reaction is 12-hydroxy-(5Z,8Z,10E,14Z)-eicosatetraenoate + ATP + CoA = 12-hydroxy-(5Z,8Z,10E,14Z)-eicosatetraenoyl-CoA + AMP + diphosphate. It carries out the reaction 5-hydroxy-(6E,8Z,11Z,14Z)-eicosatetraenoate + ATP + CoA = 5-hydroxy-(6E,8Z,11Z,14Z)-eicosatetraenoyl-CoA + AMP + diphosphate. It catalyses the reaction 5,6-epoxy-(8Z,11Z,14Z)-eicosatrienoate + ATP + CoA = 5,6-epoxy-(8Z,11Z,14Z)-eicosatrienoyl-CoA + AMP + diphosphate. The enzyme catalyses 14,15-epoxy-(5Z,8Z,11Z)-eicosatrienoate + ATP + CoA = 14,15-epoxy-(5Z,8Z,11Z)-eicosatrienoyl-CoA + AMP + diphosphate. The catalysed reaction is 11,12-epoxy-(5Z,8Z,14Z)-eicosatrienoate + ATP + CoA = 11,12-epoxy-(5Z,8Z,14Z)-eicosatrienoyl-CoA + AMP + diphosphate. It carries out the reaction 8,9-epoxy-(5Z,11Z,14Z)-eicosatrienoate + ATP + CoA = 8,9-epoxy-(5Z,11Z,14Z)-eicosatrienoyl-CoA + AMP + diphosphate. With respect to regulation, both triacsin C and rosiglitazone inhibit arachidonoyl-CoA ligase activity. Its function is as follows. Catalyzes the conversion of long-chain fatty acids to their active form acyl-CoA for both synthesis of cellular lipids, and degradation via beta-oxidation. Preferentially activates arachidonate and eicosapentaenoate as substrates. Preferentially activates 8,9-EET &gt; 14,15-EET &gt; 5,6-EET &gt; 11,12-EET. Modulates glucose-stimulated insulin secretion by regulating the levels of unesterified EETs. Modulates prostaglandin E2 secretion. This Homo sapiens (Human) protein is Long-chain-fatty-acid--CoA ligase 4 (ACSL4).